The following is a 227-amino-acid chain: PKHD-type hydroxylase ACIAD0531 (227 aa).

The Fe2OG dioxygenase domain occupies 78 to 178 (HIIPPLFNRY…RFASFFWVQS (101 aa)). Fe cation-binding residues include histidine 96, aspartate 98, and histidine 159. Arginine 169 lines the 2-oxoglutarate pocket.

The cofactor is Fe(2+). Requires L-ascorbate as cofactor.

The chain is PKHD-type hydroxylase ACIAD0531 from Acinetobacter baylyi (strain ATCC 33305 / BD413 / ADP1).